The chain runs to 881 residues: Receptor-like protein 41 (881 aa).

The N-terminal stretch at methionine 1–proline 21 is a signal peptide. Residues serine 22–glutamate 844 lie on the Extracellular side of the membrane. Asparagine 58, asparagine 70, asparagine 91, asparagine 109, and asparagine 145 each carry an N-linked (GlcNAc...) asparagine glycan. LRR repeat units follow at residues phenylalanine 97 to methionine 121, leucine 122 to asparagine 145, leucine 146 to leucine 169, arginine 170 to leucine 195, histidine 197 to asparagine 219, leucine 220 to leucine 244, threonine 245 to leucine 267, threonine 268 to methionine 291, phenylalanine 293 to serine 317, leucine 319 to leucine 340, asparagine 342 to serine 364, phenylalanine 365 to serine 390, leucine 391 to serine 412, leucine 413 to leucine 437, arginine 439 to asparagine 462, and serine 463 to isoleucine 486. Residue asparagine 189 is glycosylated (N-linked (GlcNAc...) asparagine). 2 N-linked (GlcNAc...) asparagine glycosylation sites follow: asparagine 243 and asparagine 266. Residues asparagine 305 and asparagine 312 are each glycosylated (N-linked (GlcNAc...) asparagine). Asparagine 402 carries an N-linked (GlcNAc...) asparagine glycan. A glycan (N-linked (GlcNAc...) asparagine) is linked at asparagine 462. An LRR 17; degenerate repeat occupies isoleucine 487–asparagine 506. N-linked (GlcNAc...) asparagine glycans are attached at residues asparagine 506 and asparagine 519. LRR repeat units lie at residues arginine 507–leucine 528, serine 529–aspartate 552, proline 554–cysteine 576, alanine 578–valine 599, leucine 600–serine 624, phenylalanine 627–asparagine 651, threonine 701–leucine 724, lysine 725–leucine 748, valine 749–leucine 772, and phenylalanine 774–glycine 797. Asparagine 575 is a glycosylation site (N-linked (GlcNAc...) asparagine). Asparagine 731 carries an N-linked (GlcNAc...) asparagine glycan. The N-linked (GlcNAc...) asparagine glycan is linked to asparagine 779. Residues glycine 845–alanine 865 form a helical membrane-spanning segment. At serine 866–arginine 881 the chain is on the cytoplasmic side.

Belongs to the RLP family.

It is found in the cell membrane. May be involved in ABA-induced senescence responses. This chain is Receptor-like protein 41, found in Arabidopsis thaliana (Mouse-ear cress).